We begin with the raw amino-acid sequence, 315 residues long: Methionyl-tRNA formyltransferase (315 aa).

113-116 (SILP) is a binding site for (6S)-5,6,7,8-tetrahydrofolate.

This sequence belongs to the Fmt family.

It catalyses the reaction L-methionyl-tRNA(fMet) + (6R)-10-formyltetrahydrofolate = N-formyl-L-methionyl-tRNA(fMet) + (6S)-5,6,7,8-tetrahydrofolate + H(+). Its function is as follows. Attaches a formyl group to the free amino group of methionyl-tRNA(fMet). The formyl group appears to play a dual role in the initiator identity of N-formylmethionyl-tRNA by promoting its recognition by IF2 and preventing the misappropriation of this tRNA by the elongation apparatus. This is Methionyl-tRNA formyltransferase from Aliivibrio fischeri (strain MJ11) (Vibrio fischeri).